Consider the following 123-residue polypeptide: Small ribosomal subunit protein uS13 (123 aa).

The segment at 95–123 (GLPVRGQRTKTNARTRKGPIKTVGAKRKK) is disordered.

Belongs to the universal ribosomal protein uS13 family. As to quaternary structure, part of the 30S ribosomal subunit. Forms a loose heterodimer with protein S19. Forms two bridges to the 50S subunit in the 70S ribosome.

Its function is as follows. Located at the top of the head of the 30S subunit, it contacts several helices of the 16S rRNA. In the 70S ribosome it contacts the 23S rRNA (bridge B1a) and protein L5 of the 50S subunit (bridge B1b), connecting the 2 subunits; these bridges are implicated in subunit movement. Contacts the tRNAs in the A and P-sites. This Desulfitobacterium hafniense (strain DSM 10664 / DCB-2) protein is Small ribosomal subunit protein uS13.